Here is a 440-residue protein sequence, read N- to C-terminus: Zinc finger MYND domain-containing protein 10 (440 aa).

Zn(2+) contacts are provided by C394, C397, C405, C408, C414, C418, H426, and C430. An MYND-type zinc finger spans residues 394-430; the sequence is CGYCNAEASKRCSRCQNVWYCCRECQVKHWEKHGKTC.

The protein belongs to the ZMYND10 family. In terms of assembly, interacts (via C-terminus) with DNAAF11 (via CS domain); this interaction stabilizes DNAAF11 at the protein level. Interacts (via C-terminus) with DNAL1; this interaction stabilizes DNAL1 at the protein level. Interacts with DNAAF4, HSPA8, IQUB, RUVBL2 and DYNTL5. As to expression, expressed in the testis. Expressed in the tracheal epithelium. Restricted to regions containing motile cilia.

Its subcellular location is the cytoplasm. It localises to the cytoskeleton. The protein localises to the microtubule organizing center. The protein resides in the centrosome. It is found in the centriolar satellite. Its subcellular location is the apical cell membrane. It localises to the dynein axonemal particle. Its function is as follows. Plays a role in axonemal structure organization and motility. Involved in axonemal pre-assembly of inner and outer dynein arms (IDA and ODA, respectively) for proper axoneme building for cilia motility. May act by indirectly regulating transcription of dynein proteins. The protein is Zinc finger MYND domain-containing protein 10 (Zmynd10) of Mus musculus (Mouse).